Here is a 735-residue protein sequence, read N- to C-terminus: Serine/threonine-protein kinase BRSK2 (735 aa).

Residues 20 to 271 (YRLEKTLGKG…LEHIQKHIWY (252 aa)) form the Protein kinase domain. Residues 26-34 (LGKGQTGLV) and Lys49 contribute to the ATP site. Asp142 (proton acceptor) is an active-site residue. Thr175 is modified (phosphothreonine; by LKB1). At Thr261 the chain carries Phosphothreonine; by PKA. A Phosphoserine modification is found at Ser295. Positions 298–340 (DIDPDVLDSMHSLGCFRDRNKLLQDLLSEEENQEKMIYFLLLD) constitute a UBA domain. Residues 346–367 (PSHEDEDLPPRNEIDPPRKRVD) show a composition bias toward basic and acidic residues. 2 disordered regions span residues 346-476 (PSHE…GVPW) and 492-516 (RFHR…SSPE). Ser368, Ser383, Ser394, Ser413, Ser424, and Ser428 each carry phosphoserine. Positions 411–429 (SRSISGASSGLSTSPLSSP) are enriched in low complexity. Positions 432–446 (TPHPSPRGSPLPTPK) are enriched in pro residues. Ser456 is subject to Phosphoserine. Phosphothreonine is present on residues Thr460, Thr464, and Thr510. 3 positions are modified to phosphoserine: Ser513, Ser514, and Ser521. A KEN box motif is present at residues 604–606 (KEN). The tract at residues 682–735 (KNGQAAQAPSTPAKRSAHGPLGDSAAAGPGGDTEYPMGKDMAKMGPPAARREQP) is disordered.

The protein belongs to the protein kinase superfamily. CAMK Ser/Thr protein kinase family. SNF1 subfamily. In terms of assembly, interacts with FZR1, a regulatory subunit of the APC ubiquitin ligase complex. Interacts with COPS5. Interacts with PAK1. Requires Mg(2+) as cofactor. In terms of processing, may be phosphorylated at Thr-261 by PKA. Phosphorylated at Thr-175 by STK11/LKB1 in complex with STE20-related adapter-alpha (STRADA) pseudo kinase and CAB39. Not phosphorylated at Thr-175 by CaMKK2. In contrast, it is phosphorylated and activated by CaMKK1. May be inactivated via dephosphorylation of Thr-175 by PP2C. Polyubiquitinated by the APC complex in conjunction with FZR1, leading to its proteasomal degradation. Targeted for proteasomal degradation by interaction with COPS5. BRSK2 levels change during the cell cycle. BRSK2 levels are low at the G1/S boundary and gradually increase as cells progress into G2 phase. BRSK2 levels decrease rapidly at the end of mitosis. As to expression, detected in pancreas islets and in brain (at protein level). Detected in brain and pancreas.

The protein resides in the cytoplasm. It is found in the cytoskeleton. It localises to the microtubule organizing center. Its subcellular location is the centrosome. The protein localises to the perinuclear region. The protein resides in the endoplasmic reticulum. The enzyme catalyses L-seryl-[protein] + ATP = O-phospho-L-seryl-[protein] + ADP + H(+). It carries out the reaction L-threonyl-[protein] + ATP = O-phospho-L-threonyl-[protein] + ADP + H(+). The catalysed reaction is L-seryl-[tau protein] + ATP = O-phospho-L-seryl-[tau protein] + ADP + H(+). It catalyses the reaction L-threonyl-[tau protein] + ATP = O-phospho-L-threonyl-[tau protein] + ADP + H(+). Its activity is regulated as follows. Activated by phosphorylation on Thr-175 by STK11/LKB1. Serine/threonine-protein kinase that plays a key role in polarization of neurons and axonogenesis, cell cycle progress and insulin secretion. Phosphorylates CDK16, CDC25C, MAPT/TAU, PAK1 and WEE1. Following phosphorylation and activation by STK11/LKB1, acts as a key regulator of polarization of cortical neurons, probably by mediating phosphorylation of microtubule-associated proteins such as MAPT/TAU at 'Thr-504' and 'Ser-554'. Also regulates neuron polarization by mediating phosphorylation of WEE1 at 'Ser-642' in post-mitotic neurons, leading to down-regulate WEE1 activity in polarized neurons. Plays a role in the regulation of the mitotic cell cycle progress and the onset of mitosis. Plays a role in the regulation of insulin secretion in response to elevated glucose levels, probably via phosphorylation of CDK16 and PAK1. While BRSK2 phosphorylated at Thr-175 can inhibit insulin secretion, BRSK2 phosphorylated at Thr-261 can promote insulin secretion. Regulates reorganization of the actin cytoskeleton. May play a role in the apoptotic response triggered by endoplasmic reticulum (ER) stress. This chain is Serine/threonine-protein kinase BRSK2 (Brsk2), found in Mus musculus (Mouse).